We begin with the raw amino-acid sequence, 154 residues long: PHA granule-associated protein PhaP (154 aa).

Its subcellular location is the cytoplasmic granule. Functionally, polyhydroxyalkanoate (PHA) granule structural protein. Important for PHA granule formation and separation, and for cell growth. The polypeptide is PHA granule-associated protein PhaP (phaP) (Haloferax mediterranei (strain ATCC 33500 / DSM 1411 / JCM 8866 / NBRC 14739 / NCIMB 2177 / R-4) (Halobacterium mediterranei)).